We begin with the raw amino-acid sequence, 415 residues long: Serine hydroxymethyltransferase 3 (415 aa).

(6S)-5,6,7,8-tetrahydrofolate is bound by residues Leu122 and 126–128 (GHL). Lys230 is modified (N6-(pyridoxal phosphate)lysine).

The protein belongs to the SHMT family. In terms of assembly, homodimer. It depends on pyridoxal 5'-phosphate as a cofactor.

The protein localises to the cytoplasm. It catalyses the reaction (6R)-5,10-methylene-5,6,7,8-tetrahydrofolate + glycine + H2O = (6S)-5,6,7,8-tetrahydrofolate + L-serine. The protein operates within one-carbon metabolism; tetrahydrofolate interconversion. Its pathway is amino-acid biosynthesis; glycine biosynthesis; glycine from L-serine: step 1/1. Its function is as follows. Catalyzes the reversible interconversion of serine and glycine with tetrahydrofolate (THF) serving as the one-carbon carrier. This reaction serves as the major source of one-carbon groups required for the biosynthesis of purines, thymidylate, methionine, and other important biomolecules. Also exhibits THF-independent aldolase activity toward beta-hydroxyamino acids, producing glycine and aldehydes, via a retro-aldol mechanism. In Burkholderia lata (strain ATCC 17760 / DSM 23089 / LMG 22485 / NCIMB 9086 / R18194 / 383), this protein is Serine hydroxymethyltransferase 3.